The chain runs to 342 residues: Succinylglutamate desuccinylase (342 aa).

3 residues coordinate Zn(2+): His-63, Glu-66, and His-155. The active site involves Glu-219.

The protein belongs to the AspA/AstE family. Succinylglutamate desuccinylase subfamily. The cofactor is Zn(2+).

It carries out the reaction N-succinyl-L-glutamate + H2O = L-glutamate + succinate. It participates in amino-acid degradation; L-arginine degradation via AST pathway; L-glutamate and succinate from L-arginine: step 5/5. In terms of biological role, transforms N(2)-succinylglutamate into succinate and glutamate. The protein is Succinylglutamate desuccinylase of Vibrio parahaemolyticus serotype O3:K6 (strain RIMD 2210633).